A 68-amino-acid polypeptide reads, in one-letter code: Conotoxin G1.9 (68 aa).

The N-terminal stretch at 1–21 (MGMRMMFTVFLLVVLATTVVS) is a signal peptide. The propeptide occupies 22-44 (FTSRRGPKSRRGEPVPTTVINYG). 2 disulfide bridges follow: Cys46/Cys52 and Cys47/Cys61.

Belongs to the conotoxin A superfamily. As to expression, expressed by the venom duct.

Its subcellular location is the secreted. Functionally, does not show activity on all the human nAChR subtypes studied. The protein is Conotoxin G1.9 of Conus geographus (Geography cone).